A 218-amino-acid polypeptide reads, in one-letter code: Ribonuclease T (218 aa).

An Exonuclease domain is found at 24–198 (VIIDVETAGF…YDAERTAELF (175 aa)). Residues Asp-27, Glu-29, His-185, and Asp-190 each contribute to the Mg(2+) site. His-185 serves as the catalytic Proton donor/acceptor.

The protein belongs to the RNase T family. Homodimer. Mg(2+) is required as a cofactor.

Its function is as follows. Trims short 3' overhangs of a variety of RNA species, leaving a one or two nucleotide 3' overhang. Responsible for the end-turnover of tRNA: specifically removes the terminal AMP residue from uncharged tRNA (tRNA-C-C-A). Also appears to be involved in tRNA biosynthesis. The protein is Ribonuclease T of Histophilus somni (strain 129Pt) (Haemophilus somnus).